The primary structure comprises 2547 residues: Piezo-type mechanosensitive ion channel component 1 (2547 aa).

Over 1 to 12 (MEPHVLGAGLYW) the chain is Cytoplasmic. A helical transmembrane segment spans residues 13–25 (LLLPCTLLAASLL). Over 26 to 28 (RFN) the chain is Extracellular. The chain crosses the membrane as a helical span at residues 29–44 (ALSLVYLLFLLLLPWL). At 45 to 58 (PGPSRHSIPGHTGR) the chain is on the cytoplasmic side. A helical membrane pass occupies residues 59–81 (LLRALLCLSLLFLVAHLAFQICL). Residues 82–121 (HTVPHLDQFLGQNGSLWVKVSQHIGVTRLDLKDIFNTTRL) lie on the Extracellular side of the membrane. Asparagine 94 carries an N-linked (GlcNAc...) asparagine glycan. Residues 122 to 138 (VAPDLGVLLASSLCLGL) form a helical membrane-spanning segment. The Cytoplasmic segment spans residues 139–201 (CGRLTRKAGQ…ASRFRVTAHW (63 aa)). The chain crosses the membrane as a helical span at residues 202–221 (LLMTSGRTLVIVLLALAGIA). The Extracellular portion of the chain corresponds to 222-223 (HP). A helical membrane pass occupies residues 224-243 (SAFSSIYLVVFLAICTWWSC). Topologically, residues 244-254 (HFPLSPLGFNT) are cytoplasmic. Residues 255–275 (LCVMVSCFGAGHLICLYCYQT) form a helical membrane-spanning segment. The Extracellular segment spans residues 276 to 316 (PFIQDMLPPGNIWARLFGLKNFVDLPNYSSPNALVLNTKHA). A helical membrane pass occupies residues 317-337 (WPIYVSPGILLLLYYTATSLL). Residues 338–424 (KLHKSCPSEL…EMSPLHGLGH (87 aa)) are Cytoplasmic-facing. Residues 347–387 (LRKETPREDEEHELELDHLEPEPQARDATQGEMPMTTEPDL) form a disordered region. A compositionally biased stretch (basic and acidic residues) spans 361-371 (ELDHLEPEPQA). The helical transmembrane segment at 425–445 (LIMDQSYVCALIAMMVWSIMY) threads the bilayer. Residues 446 to 447 (HS) lie on the Extracellular side of the membrane. Residues 448 to 463 (WLTFVLLLWACLIWTV) form a helical membrane-spanning segment. At 464–468 (RSRHQ) the chain is on the cytoplasmic side. The helical transmembrane segment at 469-491 (LAMLCSPCILLYGLTLCCLRYVW) threads the bilayer. Residues 492-518 (AMELPELPTTLGPVSLHQLGLEHTRYP) are Extracellular-facing. Residues 519–536 (CLDLGAMLLYLLTFWLLL) form a helical membrane-spanning segment. The Cytoplasmic segment spans residues 537–580 (RQFVKEKLLKKQKVPAALLEVTVADTEPTQTQTLLRSLGELVTG). The helical transmembrane segment at 581-601 (IYVKYWIYVCAGMFIVVSFAG) threads the bilayer. A topological domain (extracellular) is located at residue arginine 602. A helical transmembrane segment spans residues 603–623 (LVVYKIVYMFLFLLCLTLFQV). The Cytoplasmic portion of the chain corresponds to 624 to 633 (YYTLWRKLLR). Residues 634 to 655 (VFWWLVVAYTMLVLIAVYTFQF) traverse the membrane as a helical segment. Over 656 to 685 (QDFPTYWRNLTGFTDEQLGDLGLEQFSVSE) the chain is Extracellular. The helical transmembrane segment at 686 to 702 (LFSSILIPGFFLLACIL) threads the bilayer. Over 703–811 (QLHYFHRPFM…RRLLELHVFK (109 aa)) the chain is Cytoplasmic. Serine 758 is modified (phosphoserine). A helical membrane pass occupies residues 812 to 823 (LVALYTVWVALK). Residues 824–826 (EVS) lie on the Extracellular side of the membrane. The helical transmembrane segment at 827-840 (VMNLLLVVLWAFAL) threads the bilayer. Residues 841-854 (PYPRFRPMASCLST) lie on the Cytoplasmic side of the membrane. Residues 855 to 869 (VWTCIIIVCKMLYQL) form a helical membrane-spanning segment. The Extracellular segment spans residues 870 to 921 (KIVNPHEYSSNCTEPFPNNTNLQPLEINQSLLYRGPVDPANWFGVRKGYPNL). Residues 922 to 949 (GYIQNHLQILLLLVFEAVVYRRQEHYRR) form a helical membrane-spanning segment. The Cytoplasmic segment spans residues 950 to 989 (QHQQAPLPAQAVCADGTRQRLDQDLLSCLKYFINFFFYKF). The helical transmembrane segment at 990 to 1005 (GLEICFLMAVNVIGQR) threads the bilayer. Residues 1006–1007 (MN) lie on the Extracellular side of the membrane. A helical transmembrane segment spans residues 1008-1023 (FMVILHGCWLVAILTR). The Cytoplasmic portion of the chain corresponds to 1024–1036 (RRREAIARLWPNY). A helical transmembrane segment spans residues 1037 to 1052 (CLFLTLFLLYQYLLCL). The Extracellular segment spans residues 1053–1091 (GMPPALCIDYPWRWSKAIPMNSALIKWLYLPDFFRAPNS). A helical transmembrane segment spans residues 1092–1113 (TNLISDFLLLLCASQQWQVFSA). Topologically, residues 1114–1148 (ERTEEWQRMAGINTDHLEPLRGEPNPIPNFIHCRS) are cytoplasmic. A helical transmembrane segment spans residues 1149-1175 (YLDMLKVAVFRYLFWLVLVVVFVAGAT). The Extracellular portion of the chain corresponds to 1176-1180 (RISIF). The helical transmembrane segment at 1181 to 1199 (GLGYLLACFYLLLFGTTLL) threads the bilayer. The Cytoplasmic portion of the chain corresponds to 1200–1212 (QKDTRAQLVLWDC). A helical membrane pass occupies residues 1213–1231 (LILYNVTVIISKNMLSLLS). Residues 1232-1280 (CVFVEQMQSNFCWVIQLFSLVCTVKGYYDPKEMMTRDRDCLLPVEEAGI) are Extracellular-facing. The helical transmembrane segment at 1281–1297 (IWDSICFFFLLLQRRIF) threads the bilayer. The Cytoplasmic portion of the chain corresponds to 1298-1656 (LSHYFLHVSA…ELLLDRRLHI (359 aa)). The stretch at 1334-1365 (HRQIEEKSLAQLKRQMKRIRAKQEKYRQSQAS) forms a coiled coil. Disordered regions lie at residues 1354 to 1396 (AKQE…RRQW), 1456 to 1480 (RRER…DVEP), and 1567 to 1610 (TLSG…NTRS). Over residues 1361–1372 (QSQASRGQLQSK) the composition is skewed to polar residues. The span at 1376–1392 (DPSQEPGPDSPGGSSPP) shows a compositional bias: low complexity. 2 positions are modified to phosphoserine: serine 1385 and serine 1390. A compositionally biased stretch (polar residues) spans 1592–1610 (SSMTDDTSSPLSTGYNTRS). A phosphoserine mark is found at serine 1627, serine 1631, and serine 1646. A helical membrane pass occupies residues 1657 to 1700 (PELEEAERFEAQQGRTLRLLRAGYQCVAAHSELLCYFIIILNHM). Over 1701–1704 (VTAS) the chain is Extracellular. The helical transmembrane segment at 1705–1720 (AASLVLPVLVFLWAML) threads the bilayer. Over 1721 to 1728 (TIPRPSKR) the chain is Cytoplasmic. The chain crosses the membrane as a helical span at residues 1729 to 1747 (FWMTAIVFTEVMVVTKYLF). Topologically, residues 1748–1779 (QFGFFPWNSYVVLRRYENKPYFPPRILGLEKT) are extracellular. Residues 1780-1801 (DSYIKYDLVQLMALFFHRSQLL) form a helical membrane-spanning segment. The Cytoplasmic portion of the chain corresponds to 1802-1976 (CYGLWDHEED…HTKYRAATDV (175 aa)). Basic and acidic residues-rich tracts occupy residues 1816-1837 (DHCR…KLES) and 1855-1880 (PRDH…DLKP). The tract at residues 1816–1931 (DHCRSSVKDR…RPRHTQEKSK (116 aa)) is disordered. The segment covering 1881 to 1894 (RHTRHISIRFRRRK) has biased composition (basic residues). Over residues 1912 to 1931 (GEGKETTERKRPRHTQEKSK) the composition is skewed to basic and acidic residues. Residues 1977–1996 (YALMFLADIVDIIIIIFGFW) form a helical membrane-spanning segment. The Extracellular segment spans residues 1997–2016 (AFGKHSAATDIASSLSDDQV). The chain crosses the membrane as a helical span at residues 2017–2033 (PQAFLFMLLVQFGTMVI). Residues 2034 to 2047 (DRALYLRKTVLGKL) lie on the Cytoplasmic side of the membrane. A helical membrane pass occupies residues 2048–2068 (AFQVVLVVAIHIWMFFILPAV). At 2069–2076 (TERMFSQN) the chain is on the extracellular side. Residues 2077–2092 (AVAQLWYFVKCIYFAL) form a helical membrane-spanning segment. The Cytoplasmic portion of the chain corresponds to 2093 to 2192 (SAYQIRCGYP…KKKIVKYGMG (100 aa)). The helical transmembrane segment at 2193–2213 (GLIILFLIAIIWFPLLFMSLI) threads the bilayer. Residues 2214–2457 (RSVVGVVNQP…IFSDKVSPPS (244 aa)) lie on the Extracellular side of the membrane. Cysteine 2437 and cysteine 2441 form a disulfide bridge. Residues 2458 to 2478 (LGFLAGYGIVGLYVSIVLVVG) form a helical membrane-spanning segment. Over 2479–2547 (KFVRGFFSEI…TMIKWTRERE (69 aa)) the chain is Cytoplasmic.

This sequence belongs to the PIEZO (TC 1.A.75) family. Homotrimer; the homotrimer forms a propeller-shaped Piezo channel with a cation-ion conducting pore. Heterotrimeric interaction may occur between PIEZO1 and PIEZO2. Interacts with PKD2. Interacts with STOMl3. Interacts with TMC1, TMC2, PCDG15 and CIB2; the interaction may be part of the MET complex. Interacts with MDFIC (via C-terminus); the interaction prolongs Piezo channel inactivation. Interacts with MDFI (via C-terminus); the interaction prolongs Piezo channel inactivation. In terms of tissue distribution, expressed in bladder, colon, kidney and skin. Also expressed in bone marrow, liver, lung, spleen and erythrocytes (at protein level). Expressed in myoblasts (at protein level). Expressed in red blood cells. Expressed in cochlear inner and outer hair cells (IHCs and OHCs) and vestibular organ HCs.

Its subcellular location is the endoplasmic reticulum membrane. It is found in the endoplasmic reticulum-Golgi intermediate compartment membrane. The protein localises to the cell membrane. The protein resides in the cell projection. It localises to the lamellipodium membrane. It carries out the reaction K(+)(in) = K(+)(out). It catalyses the reaction Na(+)(in) = Na(+)(out). The catalysed reaction is Ca(2+)(in) = Ca(2+)(out). The enzyme catalyses Mg(2+)(in) = Mg(2+)(out). With respect to regulation, regulated by auxillary subunits MDFIC and MDFI. Down-regulated by phosphatidylserines exposed on the cell surface. Divalent ions decrease the single-channel permeability of K(+). Functionally, pore-forming subunit of the mechanosensitive non-specific cation Piezo channel required for rapidly adapting mechanically activated (MA) currents and has a key role in sensing touch and tactile pain. Piezo channels are homotrimeric three-blade propeller-shaped structures that utilize a cap-motion and plug-and-latch mechanism to gate their ion-conducting pathways. Generates currents characterized by a linear current-voltage relationship that are sensitive to ruthenium red and gadolinium. Conductance to monovalent alkali ions is highest for K(+), intermediate for Na(+) and lowest for Li(+). Divalent ions except for Mn(2+) permeate the channel but more slowly than the monovalent ions and they also reduce K(+) currents. Plays a key role in epithelial cell adhesion by maintaining integrin activation through R-Ras recruitment to the ER, most probably in its activated state, and subsequent stimulation of calpain signaling. In inner ear hair cells, PIEZO1/2 subunits may constitute part of the mechanotransducer (MET) non-selective cation channel complex where they may act as pore-forming ion-conducting component in the complex. In the kidney, may contribute to the detection of intraluminal pressure changes and to urine flow sensing. Acts as a shear-stress sensor that promotes endothelial cell organization and alignment in the direction of blood flow through calpain activation. Plays a key role in blood vessel formation and vascular structure in both development and adult physiology. Acts as a sensor of phosphatidylserine (PS) flipping at the plasma membrane and governs morphogenesis of muscle cells. In myoblasts, flippase-mediated PS enrichment at the inner leaflet of plasma membrane triggers channel activation and Ca(2+) influx followed by Rho GTPases signal transduction, leading to assembly of cortical actomyosin fibers and myotube formation. The polypeptide is Piezo-type mechanosensitive ion channel component 1 (Mus musculus (Mouse)).